A 260-amino-acid polypeptide reads, in one-letter code: uncharacterized protein (260 aa).

Residues 1 to 22 (MGYSKRFALYISILILIVMVAG) form the signal peptide. A lipid anchor (N-palmitoyl cysteine) is attached at cysteine 23. Cysteine 23 carries the S-diacylglycerol cysteine lipid modification.

The protein belongs to the staphylococcal tandem lipoprotein family.

The protein resides in the cell membrane. This is an uncharacterized protein from Staphylococcus aureus (strain N315).